Consider the following 376-residue polypeptide: 1-acyl-sn-glycerol-3-phosphate acyltransferase gamma (376 aa).

Topologically, residues 1-124 (MGLLAYLKTQ…LGSSKVLAKR (124 aa)) are cytoplasmic. Positions 96 to 101 (HNFEID) match the HXXXXD motif motif. A helical transmembrane segment spans residues 125–145 (ELLCVPLIGWTWYFLEIVFCK). Residues 146 to 316 (RKWEEDRDTV…TLLNFLCWAT (171 aa)) lie on the Lumenal side of the membrane. The helical transmembrane segment at 317-339 (ILLSPLFSFVLGVFASGSPLLIL) threads the bilayer. The Cytoplasmic segment spans residues 340–376 (TFLGFVGAASFGVRRLIGVTEIEKGSSYGNQELKKKE).

The protein belongs to the 1-acyl-sn-glycerol-3-phosphate acyltransferase family. In terms of tissue distribution, widely expressed. Mainly expressed in testis, kidney and liver (at protein level).

The protein localises to the endoplasmic reticulum membrane. The protein resides in the nucleus envelope. The catalysed reaction is a 1-acyl-sn-glycero-3-phosphate + an acyl-CoA = a 1,2-diacyl-sn-glycero-3-phosphate + CoA. The enzyme catalyses pentadecanoyl-CoA + 1-(9Z-octadecenoyl)-sn-glycero-3-phosphate = 1-(9Z)-octadecenoyl-2-pentadecanoyl-sn-glycero-3-phosphate + CoA. It catalyses the reaction heptadecanoyl-CoA + 1-(9Z-octadecenoyl)-sn-glycero-3-phosphate = 1-(9Z)-octadecenoyl-2-heptadecanoyl-sn-glycero-3-phosphate + CoA. It carries out the reaction 1-(9Z-octadecenoyl)-sn-glycero-3-phosphate + octadecanoyl-CoA = 1-(9Z-octadecenoyl)-2-octadecanoyl-sn-glycero-3-phosphate + CoA. The catalysed reaction is nonadecanoyl-CoA + 1-(9Z-octadecenoyl)-sn-glycero-3-phosphate = 1-(9Z)-octadecenoyl-2-nonadecanoyl-sn-glycero-3-phosphate + CoA. The enzyme catalyses 1-(9Z-octadecenoyl)-sn-glycero-3-phosphate + (5Z,8Z,11Z,14Z)-eicosatetraenoyl-CoA = 1-(9Z)-octadecenoyl-2-(5Z,8Z,11Z,14Z)-eicosatetraenoyl-sn-glycero-3-phosphate + CoA. It catalyses the reaction 1-(9Z-octadecenoyl)-sn-glycero-3-phosphate + (9Z)-octadecenoyl-CoA = 1,2-di-(9Z-octadecenoyl)-sn-glycero-3-phosphate + CoA. It carries out the reaction 1-(9Z-octadecenoyl)-sn-glycero-3-phosphate + (9Z,12Z)-octadecadienoyl-CoA = 1-(9Z)-octadecenoyl-2-(9Z,12Z)-octadecadienoyl-sn-glycero-3-phosphate + CoA. The catalysed reaction is 1-(9Z-octadecenoyl)-sn-glycero-3-phosphocholine + (5Z,8Z,11Z,14Z)-eicosatetraenoyl-CoA = 1-(9Z)-octadecenoyl-2-(5Z,8Z,11Z,14Z)-icosatetraenoyl-sn-glycero-3-phosphocholine + CoA. The enzyme catalyses 1-(9Z-octadecenoyl)-sn-glycero-3-phospho-(1D-myo-inositol) + (5Z,8Z,11Z,14Z)-eicosatetraenoyl-CoA = 1-(9Z-octadecenoyl)-2-(5Z,8Z,11Z,14Z-eicosatetraenoyl)-sn-glycero-3-phospho-1D-myo-inositol + CoA. It catalyses the reaction 1-(9Z-octadecenoyl)-sn-glycero-3-phospho-L-serine + (5Z,8Z,11Z,14Z)-eicosatetraenoyl-CoA = 1-(9Z-octadecenoyl)-2-(5Z,8Z,11Z,14Z-eicosatetraenoyl)-sn-glycero-3-phospho-L-serine + CoA. It carries out the reaction 1-hexadecanoyl-sn-glycero-3-phosphate + (9Z)-octadecenoyl-CoA = 1-hexadecanoyl-2-(9Z-octadecenoyl)-sn-glycero-3-phosphate + CoA. The catalysed reaction is 1-hexadecanoyl-sn-glycero-3-phosphate + (5Z,8Z,11Z,14Z)-eicosatetraenoyl-CoA = 1-hexadecanoyl-2-(5Z,8Z,11Z,14Z-eicosatetraenoyl)-sn-glycero-3-phosphate + CoA. The enzyme catalyses 1-heptadecanoyl-sn-glycero-3-phosphate + (5Z,8Z,11Z,14Z)-eicosatetraenoyl-CoA = 1-heptadecanoyl-2-(5Z,8Z,11Z,14Z)-eicosatetraenoyl-sn-glycero-3-phosphate + CoA. It catalyses the reaction 1-octadecanoyl-sn-glycero-3-phosphate + (9Z)-octadecenoyl-CoA = 1-octadecanoyl-2-(9Z-octadecenoyl)-sn-glycero-3-phosphate + CoA. It carries out the reaction 1-octadecanoyl-sn-glycero-3-phosphate + (5Z,8Z,11Z,14Z)-eicosatetraenoyl-CoA = 1-octadecanoyl-2-(5Z,8Z,11Z,14Z-eicosatetraenoyl)-sn-glycero-3-phosphate + CoA. The catalysed reaction is 1-(9Z-octadecenoyl)-sn-glycero-3-phosphate + hexadecanoyl-CoA = 1-hexadecanoyl-2-(9Z-octadecenoyl)-sn-glycero-3-phosphate + CoA. The enzyme catalyses 1-O-(9Z-octadecenyl)-sn-glycero-3-phosphate + (5Z,8Z,11Z,14Z)-eicosatetraenoyl-CoA = 1-O-(9Z-octadecenyl)-2-(5Z,8Z,11Z,14Z-eicosatetraenoyl)-sn-glycero-3-phosphate + CoA. It catalyses the reaction a 1-acyl-sn-glycero-3-phospho-(1D-myo-inositol) + (5Z,8Z,11Z,14Z)-eicosatetraenoyl-CoA = a 1-acyl-2-(5Z,8Z,11Z,14Z-eicosatetraenoyl)-sn-glycero-3-phospho-(1D-myo-inositol) + CoA. The protein operates within phospholipid metabolism; CDP-diacylglycerol biosynthesis; CDP-diacylglycerol from sn-glycerol 3-phosphate: step 2/3. With respect to regulation, in males, activity increases in an age-dependent fashion, maybe derived from the induction by sex-hormones. In terms of biological role, converts 1-acyl-sn-glycerol-3-phosphate (lysophosphatidic acid or LPA) into 1,2-diacyl-sn-glycerol-3-phosphate (phosphatidic acid or PA) by incorporating an acyl moiety at the sn-2 position of the glycerol backbone. Acts on LPA containing saturated or unsaturated fatty acids C16:0-C20:4 at the sn-1 position using C18:1, C20:4 or C18:2-CoA as the acyl donor. Also acts on lysophosphatidylcholine, lysophosphatidylinositol and lysophosphatidylserine using C18:1 or C20:4-CoA. Has a preference for arachidonoyl-CoA as a donor. Also has a modest lysophosphatidylinositol acyltransferase (LPIAT) activity, converts lysophosphatidylinositol (LPI) into phosphatidylinositol. This Mus musculus (Mouse) protein is 1-acyl-sn-glycerol-3-phosphate acyltransferase gamma.